The following is a 125-amino-acid chain: Small ribosomal subunit protein uS12m (125 aa).

This sequence belongs to the universal ribosomal protein uS12 family.

It is found in the mitochondrion. In terms of biological role, protein S12 is involved in the translation initiation step. The chain is Small ribosomal subunit protein uS12m (RPS12) from Helianthus annuus (Common sunflower).